We begin with the raw amino-acid sequence, 294 residues long: 4-hydroxy-tetrahydrodipicolinate synthase (294 aa).

Pyruvate is bound at residue Thr47. Tyr135 (proton donor/acceptor) is an active-site residue. Lys163 (schiff-base intermediate with substrate) is an active-site residue. Residue Thr205 coordinates pyruvate.

This sequence belongs to the DapA family. In terms of assembly, homotetramer; dimer of dimers.

It localises to the cytoplasm. The catalysed reaction is L-aspartate 4-semialdehyde + pyruvate = (2S,4S)-4-hydroxy-2,3,4,5-tetrahydrodipicolinate + H2O + H(+). It functions in the pathway amino-acid biosynthesis; L-lysine biosynthesis via DAP pathway; (S)-tetrahydrodipicolinate from L-aspartate: step 3/4. Functionally, catalyzes the condensation of (S)-aspartate-beta-semialdehyde [(S)-ASA] and pyruvate to 4-hydroxy-tetrahydrodipicolinate (HTPA). The chain is 4-hydroxy-tetrahydrodipicolinate synthase from Rickettsia africae (strain ESF-5).